The following is a 183-amino-acid chain: UPF0397 protein VSAL_I1988 (183 aa).

5 consecutive transmembrane segments (helical) span residues 8-28 (VVVIAIGAALYGIGGLPMFGI), 41-61 (AVLALFSVLYGPIVGFLVGFI), 74-94 (VWLTWILGSGIVGMIIGLFPI), 110-130 (FFIFVVLAFVGNVIGYGTSAF), and 147-167 (LCIIAAGNTVLIAVVGYFILT).

It belongs to the UPF0397 family.

Its subcellular location is the cell membrane. The protein is UPF0397 protein VSAL_I1988 of Aliivibrio salmonicida (strain LFI1238) (Vibrio salmonicida (strain LFI1238)).